The chain runs to 76 residues: Exodeoxyribonuclease 7 small subunit (76 aa).

This sequence belongs to the XseB family. As to quaternary structure, heterooligomer composed of large and small subunits.

It localises to the cytoplasm. The enzyme catalyses Exonucleolytic cleavage in either 5'- to 3'- or 3'- to 5'-direction to yield nucleoside 5'-phosphates.. Bidirectionally degrades single-stranded DNA into large acid-insoluble oligonucleotides, which are then degraded further into small acid-soluble oligonucleotides. The sequence is that of Exodeoxyribonuclease 7 small subunit from Geotalea daltonii (strain DSM 22248 / JCM 15807 / FRC-32) (Geobacter daltonii).